Reading from the N-terminus, the 248-residue chain is Tyrosine recombinase XerD-like (248 aa).

A Core-binding (CB) domain is found at 1 to 72 (MKSYIEPFIA…TANQFLYYLY (72 aa)). Residues 85–248 (DTMKVMRTEK…PVTLEKYYKS (164 aa)) enclose the Tyr recombinase domain. Catalysis depends on residues K149 and R213. Residue Y245 is the O-(3'-phospho-DNA)-tyrosine intermediate of the active site.

This sequence belongs to the 'phage' integrase family. XerD-like subfamily.

It localises to the cytoplasm. Putative tyrosine recombinase. Not involved in the cutting and rejoining of the recombining DNA molecules on dif(SL) site. The sequence is that of Tyrosine recombinase XerD-like from Streptococcus pyogenes serotype M4 (strain MGAS10750).